Consider the following 425-residue polypeptide: Protein disulfide isomerase-like 5-3 (425 aa).

Positions 1–28 are cleaved as a signal peptide; that stretch reads MGKPTLPPVVVVVVLLLLVVVLPATTCG. The Thioredoxin domain occupies 29–153; sequence ADAGGGGEAE…LVENLKKLVA (125 aa). Active-site nucleophile residues include Cys75 and Cys78. Cys75 and Cys78 are oxidised to a cystine. A helical transmembrane segment spans residues 386–406; the sequence is LLGVNAVYILVFLVAVLVLLM.

Belongs to the protein disulfide isomerase family.

The protein resides in the membrane. In terms of biological role, acts as a protein-folding catalyst that interacts with nascent polypeptides to catalyze the formation, isomerization, and reduction or oxidation of disulfide bonds. May play a role in storage protein biogenesis. The polypeptide is Protein disulfide isomerase-like 5-3 (PDIL5-3) (Oryza sativa subsp. japonica (Rice)).